The primary structure comprises 591 residues: Solute carrier family 40 member 2, chloroplastic (591 aa).

The N-terminal 66 residues, 1-66 (MGMVTATAAA…RCYITNVEVD (66 aa)), are a transit peptide targeting the chloroplast. Transmembrane regions (helical) follow at residues 159–179 (WPAA…VGFF), 206–226 (GLNA…IYAM), 242–262 (WFIA…ALGV), 293–313 (LVCE…YHPV), 318–338 (IACG…QLIN), 391–411 (VATV…MTAL), 419–439 (PSIV…ATFI), 452–472 (AGAA…VVYW), 482–502 (LLIF…YDVV), 518–540 (LIGG…MAII), and 547–569 (FGFL…CQWL).

This sequence belongs to the ferroportin (FP) (TC 2.A.100) family. SLC40A subfamily.

The protein resides in the membrane. It localises to the plastid. It is found in the chloroplast envelope. May be involved in iron transport and iron homeostasis. This Oryza sativa subsp. japonica (Rice) protein is Solute carrier family 40 member 2, chloroplastic.